Consider the following 217-residue polypeptide: MITLALSKGRIFDDILPLLRTAGIEVLDDPEKSRKLILGTNQPDLRVVLVRATDVPTYVQYGGADIGVVGKDTLLESGSQGLYQPLDLQIAKCRISVAVRQGFDYAAAVKQGSRLKVATKYVAISRDFFATKGVHVDLIKLYGSMELAPLTGLADAIVDLVSTGSTLKANHLIEVERIMDISSHLVVNQTALKLKQAPIRKLIDAFSLACAQAAAKQ.

This sequence belongs to the ATP phosphoribosyltransferase family. Short subfamily. As to quaternary structure, heteromultimer composed of HisG and HisZ subunits.

Its subcellular location is the cytoplasm. It carries out the reaction 1-(5-phospho-beta-D-ribosyl)-ATP + diphosphate = 5-phospho-alpha-D-ribose 1-diphosphate + ATP. It participates in amino-acid biosynthesis; L-histidine biosynthesis; L-histidine from 5-phospho-alpha-D-ribose 1-diphosphate: step 1/9. Its function is as follows. Catalyzes the condensation of ATP and 5-phosphoribose 1-diphosphate to form N'-(5'-phosphoribosyl)-ATP (PR-ATP). Has a crucial role in the pathway because the rate of histidine biosynthesis seems to be controlled primarily by regulation of HisG enzymatic activity. In Polaromonas naphthalenivorans (strain CJ2), this protein is ATP phosphoribosyltransferase.